The following is a 445-amino-acid chain: Secretin receptor (445 aa).

A signal peptide spans 1–21; the sequence is MCPRPGPPLGLWLLLGFACAA. At 22 to 137 the chain is on the extracellular side; that stretch reads HLVGAPPRLC…HERQHAYLLK (116 aa). 3 disulfide bridges follow: cysteine 44–cysteine 71, cysteine 62–cysteine 103, and cysteine 85–cysteine 119. N-linked (GlcNAc...) asparagine glycans are attached at residues asparagine 68, asparagine 96, asparagine 102, and asparagine 124. The chain crosses the membrane as a helical span at residues 138-163; the sequence is LKVMYTVGYSSSLVMLLVALGILCAF. The Cytoplasmic segment spans residues 164–170; it reads RRLHCTR. Residues 171–191 traverse the membrane as a helical segment; the sequence is NYIHMHLFLSFILRALSNFIK. Residues 192 to 212 are Extracellular-facing; it reads DAVLFSSDDAIHCDAHRVGCK. The cysteines at positions 211 and 281 are disulfide-linked. The helical transmembrane segment at 213–235 threads the bilayer; that stretch reads LVMVFFQYCIMANYAWLLVEGLY. Topologically, residues 236 to 250 are cytoplasmic; that stretch reads LHSLLVVSFFSERKC. The chain crosses the membrane as a helical span at residues 251 to 272; it reads LQGFVVLGWGSPAMFVTSWAVT. Residues 273 to 287 are Extracellular-facing; the sequence is RHFLEDSGCWDINAN. Residues 288–311 traverse the membrane as a helical segment; it reads AAIWWVIRGPVILSILINFILFIN. At 312-336 the chain is on the cytoplasmic side; that stretch reads ILRILTRKLRTQETRGQDMNHYKRL. A helical transmembrane segment spans residues 337 to 352; the sequence is ARSTLLLIPLFGVHYI. At 353-363 the chain is on the extracellular side; it reads VFVFSPEGAME. A helical transmembrane segment spans residues 364–387; the sequence is IQLFFELALGSFQGLVVAVLYCFL. The Cytoplasmic portion of the chain corresponds to 388 to 445; sequence NGEVQLEVQKKWQQWHLWEPPLCPVALSSSFSNGTSSLNSTKACPSGRSRDTCKVSII.

It belongs to the G-protein coupled receptor 2 family. In terms of processing, phosphorylated on Ser and Thr residues at the cytoplasmic C-terminus by G protein-coupled receptor kinases (GRKs).

The protein resides in the cell membrane. Its subcellular location is the basolateral cell membrane. In terms of biological role, g protein-coupled receptor activated by secretin (SCT), which is involved in different processes such as regulation of the pH of the duodenal content, food intake and water homeostasis. Ligand binding causes a conformation change that triggers signaling via guanine nucleotide-binding proteins (G proteins) and activates cAMP-dependent pathway. Upon binding to secretin, regulates the pH of the duodenum by (1) inhibiting the secretion of gastric acid from the parietal cells of the stomach and (2) stimulating the production of bicarbonate (NaHCO(3)) from the ductal cells of the pancreas. In addition to regulating the pH of the duodenal content, plays a central role in diet induced thermogenesis: acts as a non-sympathetic brown fat (BAT) activator mediating prandial thermogenesis, which consequentially induces satiation. Mechanistically, secretin released by the gut after a meal binds to secretin receptor (SCTR) in brown adipocytes, activating brown fat thermogenesis by stimulating lipolysis, which is sensed in the brain and promotes satiation. Also able to stimulate lipolysis in white adipocytes. Also plays an important role in cellular osmoregulation by regulating renal water reabsorption. Also plays a role in the central nervous system: required for synaptic plasticity. The chain is Secretin receptor (SCTR) from Oryctolagus cuniculus (Rabbit).